The chain runs to 394 residues: NAD(P)H-quinone oxidoreductase subunit H (394 aa).

This sequence belongs to the complex I 49 kDa subunit family. As to quaternary structure, NDH-1 can be composed of about 15 different subunits; different subcomplexes with different compositions have been identified which probably have different functions.

Its subcellular location is the cellular thylakoid membrane. It catalyses the reaction a plastoquinone + NADH + (n+1) H(+)(in) = a plastoquinol + NAD(+) + n H(+)(out). The catalysed reaction is a plastoquinone + NADPH + (n+1) H(+)(in) = a plastoquinol + NADP(+) + n H(+)(out). In terms of biological role, NDH-1 shuttles electrons from an unknown electron donor, via FMN and iron-sulfur (Fe-S) centers, to quinones in the respiratory and/or the photosynthetic chain. The immediate electron acceptor for the enzyme in this species is believed to be plastoquinone. Couples the redox reaction to proton translocation, and thus conserves the redox energy in a proton gradient. Cyanobacterial NDH-1 also plays a role in inorganic carbon-concentration. The sequence is that of NAD(P)H-quinone oxidoreductase subunit H from Synechococcus sp. (strain ATCC 27144 / PCC 6301 / SAUG 1402/1) (Anacystis nidulans).